A 431-amino-acid chain; its full sequence is tRNA(Ile)-lysidine synthase (431 aa).

Residue S19–S24 participates in ATP binding.

It belongs to the tRNA(Ile)-lysidine synthase family.

The protein resides in the cytoplasm. It catalyses the reaction cytidine(34) in tRNA(Ile2) + L-lysine + ATP = lysidine(34) in tRNA(Ile2) + AMP + diphosphate + H(+). In terms of biological role, ligates lysine onto the cytidine present at position 34 of the AUA codon-specific tRNA(Ile) that contains the anticodon CAU, in an ATP-dependent manner. Cytidine is converted to lysidine, thus changing the amino acid specificity of the tRNA from methionine to isoleucine. The protein is tRNA(Ile)-lysidine synthase of Staphylococcus aureus (strain Mu50 / ATCC 700699).